Consider the following 398-residue polypeptide: Acetate kinase (398 aa).

A Mg(2+)-binding site is contributed by Asn-7. ATP is bound at residue Lys-14. Arg-90 is a binding site for substrate. Asp-147 (proton donor/acceptor) is an active-site residue. ATP contacts are provided by residues 207-211, 282-284, and 330-334; these read HLGNG, DMR, and GIGEN. Glu-383 contributes to the Mg(2+) binding site.

It belongs to the acetokinase family. As to quaternary structure, homodimer. Mg(2+) serves as cofactor. Requires Mn(2+) as cofactor.

It localises to the cytoplasm. It catalyses the reaction acetate + ATP = acetyl phosphate + ADP. It functions in the pathway metabolic intermediate biosynthesis; acetyl-CoA biosynthesis; acetyl-CoA from acetate: step 1/2. In terms of biological role, catalyzes the formation of acetyl phosphate from acetate and ATP. Can also catalyze the reverse reaction. In Symbiobacterium thermophilum (strain DSM 24528 / JCM 14929 / IAM 14863 / T), this protein is Acetate kinase.